An 875-amino-acid chain; its full sequence is Alanine--tRNA ligase (875 aa).

Zn(2+)-binding residues include His-596, His-600, Cys-700, and His-704.

Belongs to the class-II aminoacyl-tRNA synthetase family. Requires Zn(2+) as cofactor.

It is found in the cytoplasm. The enzyme catalyses tRNA(Ala) + L-alanine + ATP = L-alanyl-tRNA(Ala) + AMP + diphosphate. In terms of biological role, catalyzes the attachment of alanine to tRNA(Ala) in a two-step reaction: alanine is first activated by ATP to form Ala-AMP and then transferred to the acceptor end of tRNA(Ala). Also edits incorrectly charged Ser-tRNA(Ala) and Gly-tRNA(Ala) via its editing domain. This chain is Alanine--tRNA ligase, found in Methanocella arvoryzae (strain DSM 22066 / NBRC 105507 / MRE50).